Consider the following 396-residue polypeptide: Immunoglobulin heavy constant gamma 4 (396 aa).

The tract at residues 1 to 98 (ASTKGPSVFP…PSNTKVDKRV (98 aa)) is CH1. At 1-347 (ASTKGPSVFP…DGELDGLWTT (347 aa)) the chain is on the extracellular side. 3 Ig-like domains span residues 6-99 (PSVF…KRVE), 118-217 (PSVF…KTIS), and 226-322 (PQVY…KSLS). Cysteines 27 and 83 form a disulfide. The tract at residues 99-110 (ESKYGPPCPSCP) is hinge. The interval 111–220 (APEFLGGPSV…SIEKTISKAK (110 aa)) is CH2. 2 cysteine pairs are disulfide-bonded: Cys-141-Cys-201 and Cys-247-Cys-305. N-linked (GlcNAc...) (complex) asparagine glycosylation occurs at Asn-177. The CH3 stretch occupies residues 221–327 (GQPREPQVYT…QKSLSLSLEL (107 aa)). Residues 348 to 368 (ITIFITLFLLSVCYSATVTFF) traverse the membrane as a helical segment. At 369 to 396 (KVKWIFSSVVDLKQTIVPDYRNMIRQGA) the chain is on the cytoplasmic side.

As to quaternary structure, immunoglobulins are composed of two identical heavy chains and two identical light chains; disulfide-linked. In terms of processing, glycosylation on Asn-177 is required for interaction with Fc receptors and ability to activate the complement pathway. (Microbial infection) Deglycosylation on Asn-177 by S.pyogenes EndoS or Endos2 endoglucosidases prevents interaction between immunoglobulin-gamma (IgG) and Fc receptors, impairing ability to activate the complement pathway.

The protein localises to the secreted. Its subcellular location is the cell membrane. In terms of biological role, constant region of immunoglobulin heavy chains. Immunoglobulins, also known as antibodies, are membrane-bound or secreted glycoproteins produced by B lymphocytes. In the recognition phase of humoral immunity, the membrane-bound immunoglobulins serve as receptors which, upon binding of a specific antigen, trigger the clonal expansion and differentiation of B lymphocytes into immunoglobulins-secreting plasma cells. Secreted immunoglobulins mediate the effector phase of humoral immunity, which results in the elimination of bound antigens. The antigen binding site is formed by the variable domain of one heavy chain, together with that of its associated light chain. Thus, each immunoglobulin has two antigen binding sites with remarkable affinity for a particular antigen. The variable domains are assembled by a process called V-(D)-J rearrangement and can then be subjected to somatic hypermutations which, after exposure to antigen and selection, allow affinity maturation for a particular antigen. This Homo sapiens (Human) protein is Immunoglobulin heavy constant gamma 4.